A 358-amino-acid polypeptide reads, in one-letter code: Replication-associated protein (358 aa).

One can recognise a CRESS-DNA virus Rep endonuclease domain in the interval 8–116 (RIQAKNIFLT…DGDTIEWGEF (109 aa)). An RCR-1 motif is present at residues 15-18 (FLTY). The a divalent metal cation site is built by glutamate 49, histidine 57, and histidine 59. The RCR-2 motif lies at 57 to 59 (HLH). Catalysis depends on tyrosine 103, which acts as the For DNA cleavage activity. The RCR-3 motif lies at 103–106 (YVDK). Aspartate 107 provides a ligand contact to a divalent metal cation. Residues 143–153 (LEQALQILKEE) are binding to RBR1. The oligomerization stretch occupies residues 156-176 (KDYFLQHHNLLNNAQKIFQRA). 222-229 (GDSRTGKT) contributes to the ATP binding site.

It belongs to the geminiviridae Rep protein family. Homooligomer. Interacts with the replication enhancer protein (REn). Interacts with host retinoblastoma-related protein 1 (RBR1), and may thereby induce the transcription of host replicative enzymes even if the cell is not dividing anymore. Interacts with host PCNA. Interacts with host SCE1 protein. Mg(2+) is required as a cofactor. Requires Mn(2+) as cofactor.

The protein localises to the host nucleus. Its function is as follows. Essential for the replication of viral ssDNA. The closed circular ssDNA genome is first converted to a superhelical dsDNA. Rep binds a specific region at the genome origin of replication. It introduces an endonucleolytic nick within the conserved sequence 5'-TAATATTAC-3' in the intergenic region of the genome present in all geminiviruses, thereby initiating the rolling circle replication (RCR). Following cleavage, binds covalently to the 5'-phosphate of DNA as a tyrosyl ester. The cleavage gives rise to a free 3'-OH that serves as a primer for the cellular DNA polymerase. The polymerase synthesizes the (+) strand DNA by rolling circle mechanism. After one round of replication, a Rep-catalyzed nucleotidyl transfer reaction releases a circular single-stranded virus genome, thereby terminating the replication. Displays origin-specific DNA cleavage, nucleotidyl transferase, ATPase and helicase activities. The polypeptide is Replication-associated protein (Beet curly top virus (strain California/Logan) (BCTV)).